A 315-amino-acid chain; its full sequence is Adenine deaminase (315 aa).

Zn(2+) is bound by residues His-14, His-16, and His-194. Catalysis depends on Glu-197, which acts as the Proton donor. Asp-275 provides a ligand contact to Zn(2+). Asp-276 is a binding site for substrate.

The protein belongs to the metallo-dependent hydrolases superfamily. Adenosine and AMP deaminases family. Adenine deaminase type 2 subfamily. It depends on Zn(2+) as a cofactor.

The enzyme catalyses adenine + H2O + H(+) = hypoxanthine + NH4(+). Its function is as follows. Catalyzes the hydrolytic deamination of adenine to hypoxanthine. Plays an important role in the purine salvage pathway and in nitrogen catabolism. The polypeptide is Adenine deaminase (Pseudomonas putida (strain W619)).